A 239-amino-acid polypeptide reads, in one-letter code: Adapter protein MecA (239 aa).

Residues 118–128 are compositionally biased toward basic and acidic residues; the sequence is EQRTKEKEAQG. A disordered region spans residues 118-137; sequence EQRTKEKEAQGSKRQKSSAR.

It belongs to the MecA family. As to quaternary structure, homodimer.

In terms of biological role, enables the recognition and targeting of unfolded and aggregated proteins to the ClpC protease or to other proteins involved in proteolysis. The sequence is that of Adapter protein MecA from Staphylococcus aureus (strain Mu3 / ATCC 700698).